Reading from the N-terminus, the 204-residue chain is Holliday junction branch migration complex subunit RuvA (204 aa).

The tract at residues 1–64 (MIGHLTGRLV…EDAHLLFGFS (64 aa)) is domain I. Positions 65 to 143 (QKTDRTLFRE…GIQQEDFFIE (79 aa)) are domain II. The tract at residues 144 to 155 (SQHLKQPEHALN) is flexible linker. Positions 156–204 (EQDIPASEAISALIALGYKAAEAEKLVKKISKPALSSEQLIREALKAAL) are domain III.

The protein belongs to the RuvA family. Homotetramer. Forms an RuvA(8)-RuvB(12)-Holliday junction (HJ) complex. HJ DNA is sandwiched between 2 RuvA tetramers; dsDNA enters through RuvA and exits via RuvB. An RuvB hexamer assembles on each DNA strand where it exits the tetramer. Each RuvB hexamer is contacted by two RuvA subunits (via domain III) on 2 adjacent RuvB subunits; this complex drives branch migration. In the full resolvosome a probable DNA-RuvA(4)-RuvB(12)-RuvC(2) complex forms which resolves the HJ.

The protein localises to the cytoplasm. In terms of biological role, the RuvA-RuvB-RuvC complex processes Holliday junction (HJ) DNA during genetic recombination and DNA repair, while the RuvA-RuvB complex plays an important role in the rescue of blocked DNA replication forks via replication fork reversal (RFR). RuvA specifically binds to HJ cruciform DNA, conferring on it an open structure. The RuvB hexamer acts as an ATP-dependent pump, pulling dsDNA into and through the RuvAB complex. HJ branch migration allows RuvC to scan DNA until it finds its consensus sequence, where it cleaves and resolves the cruciform DNA. This is Holliday junction branch migration complex subunit RuvA from Pasteurella multocida (strain Pm70).